A 143-amino-acid chain; its full sequence is ATP synthase subunit b' (143 aa).

Residues 6-26 (ATLPLMALQFLVLAVVLNAVF) form a helical membrane-spanning segment.

This sequence belongs to the ATPase B chain family. In terms of assembly, F-type ATPases have 2 components, F(1) - the catalytic core - and F(0) - the membrane proton channel. F(1) has five subunits: alpha(3), beta(3), gamma(1), delta(1), epsilon(1). F(0) has four main subunits: a(1), b(1), b'(1) and c(10-14). The alpha and beta chains form an alternating ring which encloses part of the gamma chain. F(1) is attached to F(0) by a central stalk formed by the gamma and epsilon chains, while a peripheral stalk is formed by the delta, b and b' chains.

The protein localises to the cellular thylakoid membrane. F(1)F(0) ATP synthase produces ATP from ADP in the presence of a proton or sodium gradient. F-type ATPases consist of two structural domains, F(1) containing the extramembraneous catalytic core and F(0) containing the membrane proton channel, linked together by a central stalk and a peripheral stalk. During catalysis, ATP synthesis in the catalytic domain of F(1) is coupled via a rotary mechanism of the central stalk subunits to proton translocation. In terms of biological role, component of the F(0) channel, it forms part of the peripheral stalk, linking F(1) to F(0). The b'-subunit is a diverged and duplicated form of b found in plants and photosynthetic bacteria. This is ATP synthase subunit b' from Gloeothece citriformis (strain PCC 7424) (Cyanothece sp. (strain PCC 7424)).